We begin with the raw amino-acid sequence, 365 residues long: N5-carboxyaminoimidazole ribonucleotide synthase (365 aa).

ATP is bound by residues Arg-102, Lys-143, 148–154 (GYDGKGQ), 177–180 (EEYV), Glu-185, and 256–257 (NE). Positions 106–286 (KLFYRQHNLP…QFEQHLRAII (181 aa)) constitute an ATP-grasp domain.

This sequence belongs to the PurK/PurT family. As to quaternary structure, homodimer.

It catalyses the reaction 5-amino-1-(5-phospho-beta-D-ribosyl)imidazole + hydrogencarbonate + ATP = 5-carboxyamino-1-(5-phospho-D-ribosyl)imidazole + ADP + phosphate + 2 H(+). It participates in purine metabolism; IMP biosynthesis via de novo pathway; 5-amino-1-(5-phospho-D-ribosyl)imidazole-4-carboxylate from 5-amino-1-(5-phospho-D-ribosyl)imidazole (N5-CAIR route): step 1/2. Catalyzes the ATP-dependent conversion of 5-aminoimidazole ribonucleotide (AIR) and HCO(3)(-) to N5-carboxyaminoimidazole ribonucleotide (N5-CAIR). In Saccharolobus solfataricus (strain ATCC 35092 / DSM 1617 / JCM 11322 / P2) (Sulfolobus solfataricus), this protein is N5-carboxyaminoimidazole ribonucleotide synthase.